Here is a 234-residue protein sequence, read N- to C-terminus: 7-cyano-7-deazaguanine synthase (234 aa).

7 to 17 (LSGGLDSAVCM) is a binding site for ATP. Zn(2+)-binding residues include Cys197, Cys208, Cys211, and Cys214.

It belongs to the QueC family. Requires Zn(2+) as cofactor.

The catalysed reaction is 7-carboxy-7-deazaguanine + NH4(+) + ATP = 7-cyano-7-deazaguanine + ADP + phosphate + H2O + H(+). It functions in the pathway purine metabolism; 7-cyano-7-deazaguanine biosynthesis. Catalyzes the ATP-dependent conversion of 7-carboxy-7-deazaguanine (CDG) to 7-cyano-7-deazaguanine (preQ(0)). This Methanococcus aeolicus (strain ATCC BAA-1280 / DSM 17508 / OCM 812 / Nankai-3) protein is 7-cyano-7-deazaguanine synthase.